The sequence spans 45 residues: DNA-directed RNA polymerase subunit Rpo12 (45 aa).

Zn(2+) is bound by residues cysteine 8, cysteine 23, and cysteine 26.

This sequence belongs to the archaeal Rpo12/eukaryotic RPC10 RNA polymerase subunit family. In terms of assembly, part of the RNA polymerase complex. Zn(2+) is required as a cofactor.

The protein localises to the cytoplasm. The catalysed reaction is RNA(n) + a ribonucleoside 5'-triphosphate = RNA(n+1) + diphosphate. In terms of biological role, DNA-dependent RNA polymerase (RNAP) catalyzes the transcription of DNA into RNA using the four ribonucleoside triphosphates as substrates. The polypeptide is DNA-directed RNA polymerase subunit Rpo12 (Methanosarcina acetivorans (strain ATCC 35395 / DSM 2834 / JCM 12185 / C2A)).